The following is a 1413-amino-acid chain: ABC transporter G family member 33 (1413 aa).

Over residues 1–10 the composition is skewed to low complexity; it reads MGSSFRSSSS. The disordered stretch occupies residues 1 to 21; the sequence is MGSSFRSSSSRNEHEDGGDEA. The segment covering 11-21 has biased composition (basic and acidic residues); it reads RNEHEDGGDEA. Positions 140–412 constitute an ABC transporter 1 domain; sequence LKLSGVRTNE…FEECGFQCPE (273 aa). 172 to 179 provides a ligand contact to ATP; that stretch reads GPPGCGKT. One can recognise an ABC transmembrane type-2 1 domain in the interval 490-702; it reads ELFRACISRE…AEIGLSVNEF (213 aa). A run of 6 helical transmembrane segments spans residues 509 to 529, 546 to 566, 580 to 600, 626 to 646, 652 to 672, and 738 to 758; these read VYLFKTFQLVLAAIITMTVFI, CLFFATVVLLVDGIPELSMTV, FYPAWAYAIPATVLKIPLSFF, FMILFAVHFTSISMFRCIAAI, AAMTAGSFVMLITFVFAGFAI, and LSALLGLTIIFNTIFTLALSF. Residues 813–1065 enclose the ABC transporter 2 domain; it reads ITFQDLNYYV…CVIEYFQNIP (253 aa). 858 to 865 is an ATP binding site; that stretch reads GISGAGKT. One can recognise an ABC transmembrane type-2 2 domain in the interval 1138–1352; sequence EQFKSCLWKM…TLNLFFSSQY (215 aa). The next 7 helical transmembrane spans lie at 1157–1177, 1189–1209, 1245–1265, 1276–1296, 1302–1322, 1330–1350, and 1385–1405; these read YNLMRIGHTFISSFIFGLLFW, LFTVLGAIYGLVLFVGINNCT, IPYIFIQSAEFVIVIYPMIGF, LYAMFCNLLCFNYLAMFLISI, VAAILQSLFFTTFNIFAGFLI, WWVWFYYITPTSWTLNLFFSS, and ITAIILIAFPIALATMYAFFV.

It belongs to the ABC transporter superfamily. ABCG family. PDR (TC 3.A.1.205) subfamily. As to expression, expressed in roots and stems.

Its subcellular location is the membrane. In terms of biological role, may be a general defense protein. The polypeptide is ABC transporter G family member 33 (ABCG33) (Arabidopsis thaliana (Mouse-ear cress)).